We begin with the raw amino-acid sequence, 81 residues long: Small ribosomal subunit protein uS17 (81 aa).

This sequence belongs to the universal ribosomal protein uS17 family. As to quaternary structure, part of the 30S ribosomal subunit.

Its function is as follows. One of the primary rRNA binding proteins, it binds specifically to the 5'-end of 16S ribosomal RNA. This Protochlamydia amoebophila (strain UWE25) protein is Small ribosomal subunit protein uS17.